We begin with the raw amino-acid sequence, 229 residues long: Putative ankyrin repeat protein L148 (229 aa).

ANK repeat units lie at residues 70 to 95 (ILDYALYFSCGIGNVRIIKEMIPDNY), 96 to 126 (IGTEKLIFAAIQNDQDSVIDFFASRGFDLRI), 127 to 156 (NNDYLLRLAAEMNSLKTAKYLVSKGANCQA), and 157 to 186 (YNNAPLQKASINGHFEMVKFLVENGASVAA).

The polypeptide is Putative ankyrin repeat protein L148 (Acanthamoeba polyphaga (Amoeba)).